Reading from the N-terminus, the 390-residue chain is Homoserine O-succinyltransferase (390 aa).

Residues 56–365 (NAVLICHALS…SPHGHDAFLL (310 aa)) enclose the AB hydrolase-1 domain. Catalysis depends on Ser162, which acts as the Nucleophile. Arg232 serves as a coordination point for substrate. Residues Asp327 and His360 contribute to the active site. Asp361 contributes to the substrate binding site.

Belongs to the AB hydrolase superfamily. MetX family. Homodimer.

The protein resides in the cytoplasm. The enzyme catalyses L-homoserine + succinyl-CoA = O-succinyl-L-homoserine + CoA. It participates in amino-acid biosynthesis; L-methionine biosynthesis via de novo pathway; O-succinyl-L-homoserine from L-homoserine: step 1/1. In terms of biological role, transfers a succinyl group from succinyl-CoA to L-homoserine, forming succinyl-L-homoserine. In vitro, also has serine succinyl transferase activity. The polypeptide is Homoserine O-succinyltransferase (Litchfieldella anticariensis (strain DSM 16096 / CECT 5854 / CIP 108499 / LMG 22089 / FP35) (Halomonas anticariensis)).